We begin with the raw amino-acid sequence, 559 residues long: MNLKSDIEIAQNTKELPIKEIAQKIDLRPEEIELYGNDKAKISWKGINCIKKNQKLGKLILVTSISPTPAGEGKSTITIGLGDAIRNQLHKNTLIALREPSMGPVFGLKGGATGGGYAQIIPMEDINLHFTGDMHALTSAIDTLAALVDNYIYQDNSLELDPNRILLKRGIDVNDRTLRKITIGQGSRFNGIEHEASFAITVANELMAILCLATDINDLKKRIGNILVGFSVKDEPVYVKDLGFEGAIAALLSTALKPNLVQTLEHTPAIVHGGPFANIAHGANSVIATNTALHLSDYVLTEAGFGADLGGQKFMDFVSNHLDKRPDAVVVVATVRALKYQAEESTDHLDEENIPALEKGFANLKRHMENMAHYGVPVIVLINKFASDTDQELNKLKELVQDDGFECEIVSYHDEGSKGGIQAAEKVVELTGKASDFKPVYKPEDSVEDKIAKIAHKIYHAKDIEYSDTAKKQLAEIKKMGKDELPVIIAKTQYSFTDKKKILGAPEDFILHVKDLALKNGAGFIVVATGSILDMPGLPKHPAALDIDVDNNGKISGLF.

68–75 is an ATP binding site; it reads TPAGEGKS.

The protein belongs to the formate--tetrahydrofolate ligase family.

It carries out the reaction (6S)-5,6,7,8-tetrahydrofolate + formate + ATP = (6R)-10-formyltetrahydrofolate + ADP + phosphate. It functions in the pathway one-carbon metabolism; tetrahydrofolate interconversion. The polypeptide is Formate--tetrahydrofolate ligase (Lactobacillus gasseri (strain ATCC 33323 / DSM 20243 / BCRC 14619 / CIP 102991 / JCM 1131 / KCTC 3163 / NCIMB 11718 / NCTC 13722 / AM63)).